The chain runs to 375 residues: Transcription factor E2F4 (375 aa).

The DNA-binding element occupies 12–81 (SRHEKSLGLL…KNSIQWKGVG (70 aa)). The tract at residues 39 to 61 (LKAAADTLAVRQKRRIYDITNVL) is leucine-zipper. The short motif at 44–81 (DTLAVRQKRRIYDITNVLEGIGLIEKKSKNSIQWKGVG) is the DEF box element. The segment at 82–177 (PGCNTREIAD…NTNGQKKFQI (96 aa)) is dimerization. The tract at residues 197–300 (SSAPVVVPVP…PDPSTSFQPI (104 aa)) is disordered. Residues 220 to 270 (STPQRPALTPQNDIATSPAPTVPHSTISNAESQDCPTGQTFSMENTTSSRL) are compositionally biased toward polar residues. Residues 280–296 (SSASLDNSNDSPDPSTS) are compositionally biased toward low complexity. A transactivation region spans residues 299-375 (PIKSDLSDVL…CDLFDVPINL (77 aa)).

It belongs to the E2F/DP family. In terms of assembly, component of the drtf1/e2f transcription factor complex. Component of the EDM complex, at least composed of e2f4, e2f5, mcidas and tfdp1.

Its subcellular location is the nucleus. Functionally, transcription activator that binds DNA cooperatively with DP proteins through the E2 recognition site, 5'-TTTC[CG]CGC-3' found in the promoter region of a number of genes. Component of the EDM complex, a complex specifically required for multiciliate cell differentiation: the EDM complex binds and activate genes required for centriole biogenesis. Activates genes required for centriole assembly (plk4, cep152) and genes specifically required for motile cilia formation (foxj1). Also promotes the deuterosome pathway of centriole biogenesis by activating expression of deup1, but not its paralog cep63. The sequence is that of Transcription factor E2F4 from Xenopus laevis (African clawed frog).